Consider the following 183-residue polypeptide: NADH-ubiquinone oxidoreductase chain 5 (183 aa).

4 consecutive transmembrane segments (helical) span residues 7-27, 30-50, 111-131, and 144-164; these read FMCY…GDNS, LFLG…FWFT, AITL…AQIG, and TPVS…FMIA.

It belongs to the complex I subunit 5 family.

The protein resides in the mitochondrion inner membrane. The enzyme catalyses a ubiquinone + NADH + 5 H(+)(in) = a ubiquinol + NAD(+) + 4 H(+)(out). Its function is as follows. Core subunit of the mitochondrial membrane respiratory chain NADH dehydrogenase (Complex I) that is believed to belong to the minimal assembly required for catalysis. Complex I functions in the transfer of electrons from NADH to the respiratory chain. The immediate electron acceptor for the enzyme is believed to be ubiquinone. This chain is NADH-ubiquinone oxidoreductase chain 5 (NDH5), found in Pisum sativum (Garden pea).